A 135-amino-acid polypeptide reads, in one-letter code: Protein NrdI (135 aa).

Belongs to the NrdI family.

In terms of biological role, probably involved in ribonucleotide reductase function. The polypeptide is Protein NrdI (Brucella abortus (strain S19)).